Here is a 543-residue protein sequence, read N- to C-terminus: Chaperonin GroEL (543 aa).

ATP contacts are provided by residues 29–32 (TLGP), 86–90 (DGTTT), Gly413, 476–478 (NAA), and Asp492.

This sequence belongs to the chaperonin (HSP60) family. As to quaternary structure, forms a cylinder of 14 subunits composed of two heptameric rings stacked back-to-back. Interacts with the co-chaperonin GroES.

Its subcellular location is the cytoplasm. It carries out the reaction ATP + H2O + a folded polypeptide = ADP + phosphate + an unfolded polypeptide.. Together with its co-chaperonin GroES, plays an essential role in assisting protein folding. The GroEL-GroES system forms a nano-cage that allows encapsulation of the non-native substrate proteins and provides a physical environment optimized to promote and accelerate protein folding. In Streptococcus pyogenes serotype M1, this protein is Chaperonin GroEL.